A 197-amino-acid chain; its full sequence is Holliday junction branch migration complex subunit RuvA (197 aa).

A domain I region spans residues 1–62 (MIEFVRGEVA…EDQEVLFGFR (62 aa)). The segment at 63–141 (SRRERALFTK…ELAPDYIPSE (79 aa)) is domain II. Residues 141–145 (EGLFA) form a flexible linker region. Positions 146-197 (QGNAELNEACEALTALGYSEREVEKVKKALQGEVLSTDQYVKRALQLLLNVR) are domain III.

Belongs to the RuvA family. Homotetramer. Forms an RuvA(8)-RuvB(12)-Holliday junction (HJ) complex. HJ DNA is sandwiched between 2 RuvA tetramers; dsDNA enters through RuvA and exits via RuvB. An RuvB hexamer assembles on each DNA strand where it exits the tetramer. Each RuvB hexamer is contacted by two RuvA subunits (via domain III) on 2 adjacent RuvB subunits; this complex drives branch migration. In the full resolvosome a probable DNA-RuvA(4)-RuvB(12)-RuvC(2) complex forms which resolves the HJ.

The protein resides in the cytoplasm. Its function is as follows. The RuvA-RuvB-RuvC complex processes Holliday junction (HJ) DNA during genetic recombination and DNA repair, while the RuvA-RuvB complex plays an important role in the rescue of blocked DNA replication forks via replication fork reversal (RFR). RuvA specifically binds to HJ cruciform DNA, conferring on it an open structure. The RuvB hexamer acts as an ATP-dependent pump, pulling dsDNA into and through the RuvAB complex. HJ branch migration allows RuvC to scan DNA until it finds its consensus sequence, where it cleaves and resolves the cruciform DNA. This is Holliday junction branch migration complex subunit RuvA from Exiguobacterium sibiricum (strain DSM 17290 / CCUG 55495 / CIP 109462 / JCM 13490 / 255-15).